A 428-amino-acid polypeptide reads, in one-letter code: Diaminopimelate decarboxylase (428 aa).

Lys-64 is modified (N6-(pyridoxal phosphate)lysine). Pyridoxal 5'-phosphate contacts are provided by residues Gly-239 and 281–284; that span reads EPGR. 3 residues coordinate substrate: Arg-284, Arg-319, and Tyr-323. Cys-350 functions as the Proton donor in the catalytic mechanism. 2 residues coordinate substrate: Glu-351 and Tyr-379. Pyridoxal 5'-phosphate is bound at residue Tyr-379.

This sequence belongs to the Orn/Lys/Arg decarboxylase class-II family. LysA subfamily. As to quaternary structure, homodimer. The cofactor is pyridoxal 5'-phosphate.

The catalysed reaction is meso-2,6-diaminopimelate + H(+) = L-lysine + CO2. It participates in amino-acid biosynthesis; L-lysine biosynthesis via DAP pathway; L-lysine from DL-2,6-diaminopimelate: step 1/1. Specifically catalyzes the decarboxylation of meso-diaminopimelate (meso-DAP) to L-lysine. In Methanothermobacter thermautotrophicus (strain ATCC 29096 / DSM 1053 / JCM 10044 / NBRC 100330 / Delta H) (Methanobacterium thermoautotrophicum), this protein is Diaminopimelate decarboxylase.